We begin with the raw amino-acid sequence, 262 residues long: Cytochrome c oxidase subunit 2 (262 aa).

2 helical membrane passes run 31-51 (HIMF…YVII) and 72-92 (IIWT…SFIL). H175, C210, E212, C214, H218, and M221 together coordinate Cu cation. E212 lines the Mg(2+) pocket.

Belongs to the cytochrome c oxidase subunit 2 family. In terms of assembly, component of the cytochrome c oxidase (complex IV, CIV), a multisubunit enzyme composed of a catalytic core of 3 subunits and several supernumerary subunits. The complex exists as a monomer or a dimer and forms supercomplexes (SCs) in the inner mitochondrial membrane with ubiquinol-cytochrome c oxidoreductase (cytochrome b-c1 complex, complex III, CIII). Cu cation serves as cofactor.

It localises to the mitochondrion inner membrane. The catalysed reaction is 4 Fe(II)-[cytochrome c] + O2 + 8 H(+)(in) = 4 Fe(III)-[cytochrome c] + 2 H2O + 4 H(+)(out). In terms of biological role, component of the cytochrome c oxidase, the last enzyme in the mitochondrial electron transport chain which drives oxidative phosphorylation. The respiratory chain contains 3 multisubunit complexes succinate dehydrogenase (complex II, CII), ubiquinol-cytochrome c oxidoreductase (cytochrome b-c1 complex, complex III, CIII) and cytochrome c oxidase (complex IV, CIV), that cooperate to transfer electrons derived from NADH and succinate to molecular oxygen, creating an electrochemical gradient over the inner membrane that drives transmembrane transport and the ATP synthase. Cytochrome c oxidase is the component of the respiratory chain that catalyzes the reduction of oxygen to water. Electrons originating from reduced cytochrome c in the intermembrane space (IMS) are transferred via the dinuclear copper A center (CU(A)) of subunit 2 and heme A of subunit 1 to the active site in subunit 1, a binuclear center (BNC) formed by heme A3 and copper B (CU(B)). The BNC reduces molecular oxygen to 2 water molecules using 4 electrons from cytochrome c in the IMS and 4 protons from the mitochondrial matrix. The chain is Cytochrome c oxidase subunit 2 (COX2) from Candida albicans (strain SC5314 / ATCC MYA-2876) (Yeast).